Consider the following 1059-residue polypeptide: MLSVENGLDPRAAIQVIKKKLVGSVKALQKQHVSLDTVVTSEDGDANTMCSALEAVFIHGLHAKYIRAEAGGKRKKHTHQKPLPQPVFWPLLKAVTHKHIISDLEHLVFINTDVGRCRAWLRLALNDGLMECYLKLLLQEPARLCEYYQPTALLRDAEEAEFLLSFLQGLTSLSFELSYKSAILNEWTLTPLSLSGLCPLSELDPLTVSGAELQRKESLDSISHSSGSEDIEVQHSGHKIRRDRKLTASSLSLDTASSSQLSCSLNSDSCLLQENGPKSPDHSEEPMSYDSDLGTANADDSDRSLQEVLSEFSKAQVNSAPSSGPSQESDTPMFQTPLSLHSLANSTHLLFEGSEEPFPAHTSSGTSSGHKHQPQESPDMQPLGTAQAGPAGSTSDQQPSSPVAGAADQGSEPWKALEYGRVGPKLVVSSPTSPKGKSWISEDDFCRPPKEHALKNTSDLCISPLQGTPELRTALHGPFSQGPRKSCSLGALDKACVSSLDYRNAQTAPSPAVTQDHKNFCVVHRRQMGLSNPFRGLMKLGTVARRGAMGIWKEFFCELSPLELRLYLSDEERTCVESCSLLRCEAVGPAHSDGRFELVFSGKKLALRASSQDEAEDWLDRVREALQKVRPQQEEEWVNIQYPDQAEDSPEAPPDNLPPYSALLPEHAGAQGIQPNWTSAQVPEPDAIKESLLYLYADRTWIPYIFSLSLESLKCFRVRNNEKMLSDSHGVETIRDILPDTSLGGPAFFKIITAKAVLKLQAKNTEEAAHWRDLVRKVLASYLESVQEAVTLAGSLDENCQEVLKFATRENGFLLQYLVAIPTEKGLDSQGCFCAGCSRQIGFSFVRPKLCAFSGLYYCDFCHQDDASVIPARIIHNWDLTKRPVCRQALKFLAQIRAQPLINLQLVNASLYEHVERMHLIGRSREQLKLLGDYLGLCRSGALKELSKRLSHRNYLLESPHKFSVADLQQIAEGVYEGFLKALIEFASQHVYHCDLCTQRGFICQICHHQDIIFPFEFDTTVRCAECRTVFHQSCQAVVRKGCPRCARRRKYQEQNTVS.

One can recognise an RUN domain in the interval 40–182; the sequence is TSEDGDANTM…LSFELSYKSA (143 aa). S218 carries the post-translational modification Phosphoserine. 3 disordered regions span residues 218–244, 272–334, and 354–411; these read SLDS…RRDR, LQEN…TPMF, and SEEP…DQGS. 2 stretches are compositionally biased toward polar residues: residues 313-334 and 392-401; these read SKAQ…TPMF and GSTSDQQPSS. S430, S433, and S488 each carry phosphoserine. In terms of domain architecture, PH 1 spans 536–627; it reads GLMKLGTVAR…WLDRVREALQ (92 aa). Residues 634-640 carry the LIR motif; it reads EEEWVNI. An interaction with RAB7A region spans residues 657–1059; the sequence is LPPYSALLPE…RKYQEQNTVS (403 aa). In terms of domain architecture, PH 2 spans 686–780; it reads DAIKESLLYL…WRDLVRKVLA (95 aa). The Phorbol-ester/DAG-type zinc-finger motif lies at 989–1043; it reads QHVYHCDLCTQRGFICQICHHQDIIFPFEFDTTVRCAECRTVFHQSCQAVVRKGC.

Interacts (via N- and C-terminus) with RAB7A (GTP-bound form). Simultaneously interacts with RAB7A and ARL8B; bringing about clustering and fusion of late endosomes and lysosomes. Interacts (via RUN domain) with ARL8B (GTP-bound form); the interaction is required for PLEKHM1 localization to lysosomes and for ARL8B function in delivery and degradation of endocytic and autophagic cargo in lysosomes. PLEKHM1 and PLEKHM2 compete for interaction with ARL8B. Interacts with ARL8A; the interaction is weaker than with ARL8B. Interacts with VPS41, VPS11, VPS18, VPS33A and VPS39; indicative for an association with the HOPS complex; the interactions with, at least, VPS41, VPS11, VPS18 and VPS33A require ARL8B. Interacts with GABARAP, GABARAPL, GABARAPL2, MAP1LC3A, MAP1LC3B and MAP1LC3C. Interacts with PAFAH1B. Interacts (via N- and C-terminus) with NDEL1. Interacts (via C-terminus) with MAP3K7. Interacts (via N- and C-terminus) with FAM98A. Interacts (via C-terminus) with DEF8; this interaction is weak but increased in a RAB7A-dependent manner. May interact with sialyl-lex-positive protein. In terms of tissue distribution, expressed in testis, skeletal muscle, lung, liver, spleen, brain, heart, kidney and bone. Weakly expressed in monocytes (at protein level).

The protein resides in the autolysosome membrane. Its subcellular location is the endosome membrane. The protein localises to the late endosome membrane. It is found in the lysosome membrane. In terms of biological role, acts as a multivalent adapter protein that regulates Rab7-dependent and HOPS complex-dependent fusion events in the endolysosomal system and couples autophagic and the endocytic trafficking pathways. Acts as a dual effector of RAB7A and ARL8B that simultaneously binds these GTPases, bringing about clustering and fusion of late endosomes and lysosomes. Required for late stages of endolysosomal maturation, facilitating both endocytosis-mediated degradation of growth factor receptors and autophagosome clearance. Interaction with Arl8b is a crucial factor in the terminal maturation of autophagosomes and to mediate autophagosome-lysosome fusion. Positively regulates lysosome peripheral distribution and ruffled border formation in osteoclasts. May be involved in negative regulation of endocytic transport from early endosome to late endosome/lysosome implicating its association with Rab7. May have a role in sialyl-lex-mediated transduction of apoptotic signals. Involved in bone resorption. In Rattus norvegicus (Rat), this protein is Pleckstrin homology domain-containing family M member 1.